A 313-amino-acid chain; its full sequence is Ribosomal RNA small subunit methyltransferase H (313 aa).

S-adenosyl-L-methionine-binding positions include 35 to 37 (GGH), D55, F79, D100, and Q107.

It belongs to the methyltransferase superfamily. RsmH family.

The protein localises to the cytoplasm. It carries out the reaction cytidine(1402) in 16S rRNA + S-adenosyl-L-methionine = N(4)-methylcytidine(1402) in 16S rRNA + S-adenosyl-L-homocysteine + H(+). In terms of biological role, specifically methylates the N4 position of cytidine in position 1402 (C1402) of 16S rRNA. The sequence is that of Ribosomal RNA small subunit methyltransferase H from Burkholderia ambifaria (strain MC40-6).